Consider the following 362-residue polypeptide: N-acylethanolamine-hydrolyzing acid amidase (362 aa).

The N-terminal stretch at 1–33 is a signal peptide; the sequence is MGTPAIRAACHGAHLALALLLLLSLSDPWLWAT. Residues asparagine 42 and asparagine 112 are each glycosylated (N-linked (GlcNAc...) asparagine). Cysteine 131 acts as the Nucleophile in catalysis. Asparagine 314 and asparagine 338 each carry an N-linked (GlcNAc...) asparagine glycan.

This sequence belongs to the acid ceramidase family. As to quaternary structure, heterodimer of an alpha and a beta subunit, produced by autocatalytic cleavage. In terms of processing, N-glycosylated. Tunicamycin treatment causes a reduction in specific activity against N-palmitoylethanolamine. Post-translationally, autoproteolytic cleavage at pH 4.5 gives rise to the alpha and beta subunit. Cleavage gives rise to a conformation change that activates the enzyme. The same catalytic Cys residue mediates the autoproteolytic cleavage and subsequent hydrolysis of lipid substrates. In terms of tissue distribution, expressed in brain, cecum, colon, heart, ileum, kidney, liver, lung, spleen, stomach, submaxillary gland, testis and thymus.

Its subcellular location is the lysosome. The protein localises to the membrane. The enzyme catalyses N-hexadecanoylethanolamine + H2O = ethanolamine + hexadecanoate. The catalysed reaction is an N-(long-chain fatty acyl)ethanolamine + H2O = a long-chain fatty acid + ethanolamine. It carries out the reaction N-dodecanoylethanolamine + H2O = dodecanoate + ethanolamine. It catalyses the reaction N-tetradecanoylethanolamine + H2O = tetradecanoate + ethanolamine. The enzyme catalyses an N-acylsphing-4-enine + H2O = sphing-4-enine + a fatty acid. The catalysed reaction is N-hexadecanoylsphing-4-enine + H2O = sphing-4-enine + hexadecanoate. It carries out the reaction N-dodecanoylsphing-4-enine + H2O = dodecanoate + sphing-4-enine. Its pathway is lipid metabolism; fatty acid metabolism. Its activity is regulated as follows. Stimulated by DTT. Stimulated by nonionic detergent of the polyoxyethylenep-t-octylphenylether type (Triton X-100 or Nonidet P-40) whereas 3-[(3-cholamidopropyl)dimethylammonio]propane-1-sulfonate (CHAPS) and octyl alpha-D-glucopyranoside decrease the N-(long-chain-acyl)ethanolamine deacylase activity. Polysorbate 20 (Tween 20) is inhibitory. Stimulated by endogenous phospholipids such as choline- or ethanolamine-containing phospholipids, and dihydrolipoic acid. Functionally, degrades bioactive fatty acid amides to their corresponding acids, with the following preference: N-palmitoylethanolamine &gt; N-myristoylethanolamine &gt; N-stearoylethanolamine &gt; N-oleoylethanolamine &gt; N-linoleoylethanolamine &gt; N-arachidonoylethanolamine. This is N-acylethanolamine-hydrolyzing acid amidase from Rattus norvegicus (Rat).